A 347-amino-acid polypeptide reads, in one-letter code: Phenylalanine--tRNA ligase alpha subunit (347 aa).

A Mg(2+)-binding site is contributed by Glu261.

It belongs to the class-II aminoacyl-tRNA synthetase family. Phe-tRNA synthetase alpha subunit type 1 subfamily. As to quaternary structure, tetramer of two alpha and two beta subunits. Mg(2+) is required as a cofactor.

Its subcellular location is the cytoplasm. The enzyme catalyses tRNA(Phe) + L-phenylalanine + ATP = L-phenylalanyl-tRNA(Phe) + AMP + diphosphate + H(+). The sequence is that of Phenylalanine--tRNA ligase alpha subunit from Streptococcus thermophilus (strain ATCC BAA-491 / LMD-9).